The following is a 266-amino-acid chain: Bidirectional sugar transporter SWEET7b (266 aa).

Topologically, residues 1–9 (MVSPDLIRN) are extracellular. The helical transmembrane segment at 10-30 (MVGIVGNIISFGLFLSPVPTF) threads the bilayer. The MtN3/slv 1 domain occupies 10–97 (MVGIVGNIIS…TIFFLFSDKK (88 aa)). The Cytoplasmic segment spans residues 31–45 (YRIIKNKDVQDFKAD). A helical membrane pass occupies residues 46–66 (PYLATLLNCMLWVFYGLPIVH). Topologically, residues 67–69 (PNS) are extracellular. The helical transmembrane segment at 70-90 (ILVVTINGIGLIIEAVYLTIF) threads the bilayer. The Cytoplasmic portion of the chain corresponds to 91–101 (FLFSDKKNKKK). Residues 102–122 (MGVVLATEALFMAAVVLGVLL) traverse the membrane as a helical segment. Residues 123–131 (GAHTHQRRS) are Extracellular-facing. Residues 132-152 (LIVGILCAIFGTIMYSSPLTI) traverse the membrane as a helical segment. A MtN3/slv 2 domain is found at 133 to 216 (IVGILCAIFG…LILYAIYYRT (84 aa)). Residues 153 to 165 (MSQVVKTKSVEYM) are Cytoplasmic-facing. Residues 166 to 186 (PLLLSVVSFLNGLCWTSYALI) traverse the membrane as a helical segment. The Extracellular segment spans residues 187–189 (RLD). The chain crosses the membrane as a helical span at residues 190-210 (IFITIPNGLGVLFALMQLILY). The Cytoplasmic portion of the chain corresponds to 211–266 (AIYYRTTPKKQDKNLELPTVAPVAKDTSIVTPVSKDDDVVDGGNASHVTINITIEP).

The protein belongs to the SWEET sugar transporter family. In terms of assembly, forms homooligomers and/or heterooligomers.

Its subcellular location is the cell membrane. Functionally, mediates both low-affinity uptake and efflux of sugar across the plasma membrane. The polypeptide is Bidirectional sugar transporter SWEET7b (SWEET7B) (Oryza sativa subsp. indica (Rice)).